The primary structure comprises 128 residues: Aspartate 1-decarboxylase (128 aa).

The Schiff-base intermediate with substrate; via pyruvic acid role is filled by S25. The residue at position 25 (S25) is a Pyruvic acid (Ser). T57 contributes to the substrate binding site. Catalysis depends on Y58, which acts as the Proton donor. 73-75 (GSA) lines the substrate pocket.

Belongs to the PanD family. As to quaternary structure, heterooctamer of four alpha and four beta subunits. Pyruvate is required as a cofactor. In terms of processing, is synthesized initially as an inactive proenzyme, which is activated by self-cleavage at a specific serine bond to produce a beta-subunit with a hydroxyl group at its C-terminus and an alpha-subunit with a pyruvoyl group at its N-terminus.

It is found in the cytoplasm. The enzyme catalyses L-aspartate + H(+) = beta-alanine + CO2. It participates in cofactor biosynthesis; (R)-pantothenate biosynthesis; beta-alanine from L-aspartate: step 1/1. In terms of biological role, catalyzes the pyruvoyl-dependent decarboxylation of aspartate to produce beta-alanine. This is Aspartate 1-decarboxylase from Paraburkholderia xenovorans (strain LB400).